The chain runs to 148 residues: Large ribosomal subunit protein bL9 (148 aa).

It belongs to the bacterial ribosomal protein bL9 family.

Binds to the 23S rRNA. The polypeptide is Large ribosomal subunit protein bL9 (Caldicellulosiruptor saccharolyticus (strain ATCC 43494 / DSM 8903 / Tp8T 6331)).